The chain runs to 77 residues: Large ribosomal subunit protein bL31 (77 aa).

This sequence belongs to the bacterial ribosomal protein bL31 family. Type A subfamily. In terms of assembly, part of the 50S ribosomal subunit.

Its function is as follows. Binds the 23S rRNA. The sequence is that of Large ribosomal subunit protein bL31 from Microcystis aeruginosa (strain NIES-843 / IAM M-2473).